Reading from the N-terminus, the 352-residue chain is DNA integrity scanning protein DisA (352 aa).

Residues 3-143 (DERIVLALKS…FKYSLSEVSV (141 aa)) form the DAC domain. Residues G70, L88, and 101–105 (IRHRT) contribute to the ATP site.

Belongs to the DisA family. Homooctamer. The cofactor is Mg(2+).

It catalyses the reaction 2 ATP = 3',3'-c-di-AMP + 2 diphosphate. Participates in a DNA-damage check-point that is active prior to asymmetric division when DNA is damaged. DisA forms globular foci that rapidly scan along the chromosomes during sporulation, searching for lesions. When a lesion is present, DisA pauses at the lesion site. This triggers a cellular response that culminates in a temporary block in sporulation initiation. In terms of biological role, also has diadenylate cyclase activity, catalyzing the condensation of 2 ATP molecules into cyclic di-AMP (c-di-AMP). c-di-AMP acts as a signaling molecule that couples DNA integrity with progression of sporulation. The rise in c-di-AMP level generated by DisA while scanning the chromosome, operates as a positive signal that advances sporulation; upon encountering a lesion, the DisA focus arrests at the damaged site and halts c-di-AMP synthesis. This is DNA integrity scanning protein DisA from Carboxydothermus hydrogenoformans (strain ATCC BAA-161 / DSM 6008 / Z-2901).